A 410-amino-acid polypeptide reads, in one-letter code: Lissencephaly-1 homolog A (410 aa).

The region spanning Gln7–Met39 is the LisH domain. The stretch at Thr56–Gly82 forms a coiled coil. 7 WD repeats span residues Gly106–Lys147, Gly148–Thr187, Gly190–Thr229, Gly232–Glu271, Glu274–Thr333, Gly336–Thr375, and Ala378–Arg410.

Belongs to the WD repeat LIS1/nudF family. In terms of assembly, can self-associate. Component of the cytosolic PAF-AH (I) heterotetrameric enzyme, which is composed of PAFAH1B1 (beta), PAFAH1B2 (alpha2) and PAFAH1B3 (alpha1) subunits. The catalytic activity of the enzyme resides in the alpha1 (PAFAH1B3) and alpha2 (PAFAH1B2) subunits, whereas the beta subunit (PAFAH1B1) has regulatory activity. Trimer formation is not essential for the catalytic activity. Interacts with dynein, dynactin, nde1 and ndel1.

It is found in the cytoplasm. It localises to the cytoskeleton. The protein resides in the microtubule organizing center. Its subcellular location is the centrosome. Regulatory subunit (beta subunit) of the cytosolic type I platelet-activating factor (PAF) acetylhydrolase (PAF-AH (I)), an enzyme that catalyzes the hydrolyze of the acetyl group at the sn-2 position of PAF and its analogs and participates in PAF inactivation. Regulates the PAF-AH (I) activity in a catalytic dimer composition-dependent manner. Positively regulates the activity of the minus-end directed microtubule motor protein dynein. May enhance dynein-mediated microtubule sliding by targeting dynein to the microtubule plus end. Required for several dynein- and microtubule-dependent processes such as the maintenance of Golgi integrity, the peripheral transport of microtubule fragments and the coupling of the nucleus and centrosome. May be required for proliferation of neuronal precursors and neuronal migration. The chain is Lissencephaly-1 homolog A (pafah1b1-1) from Salmo salar (Atlantic salmon).